We begin with the raw amino-acid sequence, 235 residues long: Segregation and condensation protein A (235 aa).

Belongs to the ScpA family. As to quaternary structure, component of a cohesin-like complex composed of ScpA, ScpB and the Smc homodimer, in which ScpA and ScpB bind to the head domain of Smc. The presence of the three proteins is required for the association of the complex with DNA.

Its subcellular location is the cytoplasm. In terms of biological role, participates in chromosomal partition during cell division. May act via the formation of a condensin-like complex containing Smc and ScpB that pull DNA away from mid-cell into both cell halves. In Streptococcus agalactiae serotype III (strain NEM316), this protein is Segregation and condensation protein A.